The following is a 121-amino-acid chain: UPF0738 protein BLi01253/BL05110 (121 aa).

Belongs to the UPF0738 family.

The chain is UPF0738 protein BLi01253/BL05110 from Bacillus licheniformis (strain ATCC 14580 / DSM 13 / JCM 2505 / CCUG 7422 / NBRC 12200 / NCIMB 9375 / NCTC 10341 / NRRL NRS-1264 / Gibson 46).